A 513-amino-acid chain; its full sequence is RNA-splicing ligase RtcB homolog (513 aa).

The Mn(2+) site is built by Asp127, Cys130, His235, His267, and His361. A GMP-binding site is contributed by 234 to 238 (NHYAE). GMP is bound by residues 361–362 (HN), 410–413 (GGTM), Ser417, 436–439 (HGAG), and Lys512. His436 acts as the GMP-histidine intermediate in catalysis.

It belongs to the RtcB family. In terms of assembly, catalytic component of the tRNA-splicing ligase complex. Mn(2+) is required as a cofactor.

The enzyme catalyses a 3'-end 3'-phospho-ribonucleotide-RNA + a 5'-end dephospho-ribonucleoside-RNA + GTP = a ribonucleotidyl-ribonucleotide-RNA + GMP + diphosphate. The catalysed reaction is a 3'-end 2',3'-cyclophospho-ribonucleotide-RNA + a 5'-end dephospho-ribonucleoside-RNA + GTP + H2O = a ribonucleotidyl-ribonucleotide-RNA + GMP + diphosphate + H(+). Its function is as follows. Catalytic subunit of the tRNA-splicing ligase complex that acts by directly joining spliced tRNA halves to mature-sized tRNAs by incorporating the precursor-derived splice junction phosphate into the mature tRNA as a canonical 3',5'-phosphodiester. May act as an RNA ligase with broad substrate specificity, and may function toward other RNAs. This Micromonas commoda (strain RCC299 / NOUM17 / CCMP2709) (Picoplanktonic green alga) protein is RNA-splicing ligase RtcB homolog.